The primary structure comprises 244 residues: Mitophagy receptor atg43 (244 aa).

Residues 1–24 are disordered; the sequence is MSSESKGIPIPRSDSNKTSDVSSW. Over 1–198 the chain is Cytoplasmic; it reads MSSESKGIPI…LVALITLRDH (198 aa). The short motif at 28–31 is the atg8 interacting motif (AIM) element; sequence YELI. The tract at residues 105–131 is disordered; it reads SLSLLQSKEEDDSSNWETEDSESAVEE. Residues 113–131 are compositionally biased toward acidic residues; that stretch reads EEDDSSNWETEDSESAVEE. Positions 165–184 are involved in MIM complex binding. Required for normal vegetative cell population growth but is dispensable for mitophagy; that stretch reads PPIPDLRFQQSYLQSIQRAN. A helical membrane pass occupies residues 199-215; sequence VLYPFLSGGMWVFVRHI. Topologically, residues 216-244 are mitochondrial intermembrane; that stretch reads FQFLKLQEKGFHFGQSLRRNLGLFSTFKD.

In terms of assembly, interacts (via N-terminal atg8 interacting motif) with atg8; the interaction is direct. Interacts with the mitochondrial outer import machinery (MIM) complex subunits mim1 and mim2.

The protein localises to the mitochondrion outer membrane. Its function is as follows. Mitophagy receptor that tethers atg8 to the mitochondrial outer membrane to promote selective autophagy. The polypeptide is Mitophagy receptor atg43 (Schizosaccharomyces pombe (strain 972 / ATCC 24843) (Fission yeast)).